The following is a 537-amino-acid chain: Frizzled-4 (537 aa).

The signal sequence occupies residues 1 to 36; that stretch reads MAWRGAGPSVPGAPGGVGLSLGLLLQLLLLLGPARG. Topologically, residues 37-212 are extracellular; sequence FGDEEERRCD…KCGYDAGLYS (176 aa). In terms of domain architecture, FZ spans 40–161; it reads EEERRCDPIR…NDHNHMCMEG (122 aa). Disulfide bonds link Cys-45–Cys-106, Cys-53–Cys-99, Cys-90–Cys-128, Cys-117–Cys-158, Cys-121–Cys-145, Cys-181–Cys-200, Cys-204–Cys-282, and Cys-302–Cys-377. N-linked (GlcNAc...) asparagine glycosylation is present at Asn-59. N-linked (GlcNAc...) asparagine glycosylation occurs at Asn-144. The helical transmembrane segment at 213 to 243 threads the bilayer; the sequence is RSAKEFTDIWMAVWASLCFISTAFTVLTFLI. Topologically, residues 244–249 are cytoplasmic; the sequence is DSSRFS. Residues 250–275 form a helical membrane-spanning segment; it reads YPERPIIFLSMCYNIYSIAYIVRLTV. Over 276 to 299 the chain is Extracellular; that stretch reads GRERISCDFEEAAEPVLIQEGLKN. A helical transmembrane segment spans residues 300 to 333; that stretch reads TGCAIIFLLMYFFGMASSIWWVILTLTWFLAAGL. The Cytoplasmic segment spans residues 334–336; that stretch reads KWG. The chain crosses the membrane as a helical span at residues 337-365; it reads HEAIEMHSSYFHIAAWAIPAVKTIVILIM. At 366–383 the chain is on the extracellular side; that stretch reads RLVDADELTGLCYVGNQN. Residues 384-418 traverse the membrane as a helical segment; it reads LDALTGFVVAPLFTYLVIGTLFIAAGLVALFKIRS. The Cytoplasmic portion of the chain corresponds to 419-431; that stretch reads NLQKDGTKTDKLE. The chain crosses the membrane as a helical span at residues 432-460; it reads RLMVKIGVFSVLYTVPATCVIACYFYEIS. The Extracellular portion of the chain corresponds to 461 to 473; the sequence is NWALFRYSADDSN. A helical transmembrane segment spans residues 474 to 495; that stretch reads MAVEMLKIFMSLLVGITSGMWI. Residues 496–537 lie on the Cytoplasmic side of the membrane; that stretch reads WSAKTLHTWQKCSNRLVNSGKVKREKRGNGWVKPGKGSETVV. The short motif at 499–504 is the Lys-Thr-X-X-X-Trp motif, mediates interaction with the PDZ domain of Dvl family members element; sequence KTLHTW. The short motif at 535 to 537 is the PDZ-binding element; it reads TVV.

The protein belongs to the G-protein coupled receptor Fz/Smo family. In terms of assembly, interacts with MAGI3 and NDP. Component of a complex, at least composed of TSPAN12, FZD4 and norrin (NDP). Interacts (via FZ domain) with TSKU; TSKU competes with WNT2B for binding to FZD4, inhibiting Wnt signaling and repressing peripheral eye development. Interacts with glypican GPC3. Post-translationally, ubiquitinated by ZNRF3, leading to its degradation by the proteasome. Almost ubiquitous. Largely expressed in adult heart, skeletal muscle, ovary, and fetal kidney. Moderate amounts in adult liver, kidney, pancreas, spleen, and fetal lung, and small amounts in placenta, adult lung, prostate, testis, colon, fetal brain and liver.

The protein localises to the cell membrane. Functionally, receptor for Wnt proteins. Most frizzled receptors are coupled to the beta-catenin (CTNNB1) canonical signaling pathway, which leads to the activation of disheveled proteins, inhibition of GSK-3 kinase, nuclear accumulation of beta-catenin (CTNNB1) and activation of Wnt target genes. Plays a critical role in retinal vascularization by acting as a receptor for Wnt proteins and norrin (NDP). In retina, it can be activated by Wnt protein-binding and also by Wnt-independent signaling via binding of norrin (NDP), promoting in both cases beta-catenin (CTNNB1) accumulation and stimulation of LEF/TCF-mediated transcriptional programs. A second signaling pathway involving PKC and calcium fluxes has been seen for some family members, but it is not yet clear if it represents a distinct pathway or if it can be integrated in the canonical pathway, as PKC seems to be required for Wnt-mediated inactivation of GSK-3 kinase. Both pathways seem to involve interactions with G-proteins. May be involved in transduction and intercellular transmission of polarity information during tissue morphogenesis and/or in differentiated tissues. The sequence is that of Frizzled-4 (FZD4) from Homo sapiens (Human).